Reading from the N-terminus, the 472-residue chain is Inhibitor of Apoptosis OPG037 (472 aa).

ANK repeat units lie at residues 97 to 126 (DGNYPLHIASKINNNRIVAMLLTHGADPNA), 130 to 161 (HNKTPLYYLSGTDDEVIERINLLVQYGAKINN), 233 to 263 (DGNTPLHIVCSKTVKNVDIIDLLLPSTDVNK), 267 to 297 (FGDSPLTLLIKTLSPAHLINKLLSTSNVITD), 322 to 351 (YDSTDFKMAVEVGSIRCVKYLLDNDIICED), and 353 to 377 (MYYAVLSEYETMVDYLLFNHFSVDF).

It belongs to the orthopoxvirus OPG037 protein family. As to quaternary structure, may interact with host caspase-9-Apaf-1 complex.

The protein localises to the host cytoplasm. Inhibits host apoptosis. Acts by associating with host apoptosome. This is Inhibitor of Apoptosis OPG037 (OPG037) from Vaccinia virus (strain Western Reserve) (VACV).